The primary structure comprises 404 residues: tRNA-specific 2-thiouridylase MnmA (404 aa).

Residues 42-49 and L68 each bind ATP; that span reads GLSGGVDS. C129 functions as the Nucleophile in the catalytic mechanism. Cysteines 129 and 239 form a disulfide. Residue G154 coordinates ATP. Residues 189–191 are interaction with tRNA; that stretch reads KDQ. C239 (cysteine persulfide intermediate) is an active-site residue. The tract at residues 344–345 is interaction with tRNA; the sequence is RY.

Belongs to the MnmA/TRMU family.

It is found in the cytoplasm. The enzyme catalyses S-sulfanyl-L-cysteinyl-[protein] + uridine(34) in tRNA + AH2 + ATP = 2-thiouridine(34) in tRNA + L-cysteinyl-[protein] + A + AMP + diphosphate + H(+). Functionally, catalyzes the 2-thiolation of uridine at the wobble position (U34) of tRNA, leading to the formation of s(2)U34. The polypeptide is tRNA-specific 2-thiouridylase MnmA (Prochlorococcus marinus (strain NATL1A)).